A 135-amino-acid polypeptide reads, in one-letter code: FK506-binding protein 2 (135 aa).

An N-terminal signal peptide occupies residues 1-17 (MLLKSLFLLFLTAIAFA). A PPIase FKBP-type domain is found at 40–127 (GDLISVHYEG…VFVAELVDIA (88 aa)). Positions 132–135 (HDEL) match the Prevents secretion from ER motif.

It belongs to the FKBP-type PPIase family. FKBP2 subfamily.

It is found in the endoplasmic reticulum. It carries out the reaction [protein]-peptidylproline (omega=180) = [protein]-peptidylproline (omega=0). With respect to regulation, inhibited by both FK506 and rapamycin. PPIases accelerate the folding of proteins. It catalyzes the cis-trans isomerization of proline imidic peptide bonds in oligopeptides. The polypeptide is FK506-binding protein 2 (FPR2) (Debaryomyces hansenii (strain ATCC 36239 / CBS 767 / BCRC 21394 / JCM 1990 / NBRC 0083 / IGC 2968) (Yeast)).